We begin with the raw amino-acid sequence, 881 residues long: Ent-kaurene synthase CPS/KS, chloroplastic (881 aa).

A chloroplast-targeting transit peptide spans 1–41 (MASSTLIQNRSCGVTSSMSSFQIFRGQPLRFPGTRTPAAVQ). The Mg(2+) site is built by Asp417, Asp419, Asp635, Asp639, Asn778, Asp779, and Glu786. A DXDDTA motif motif is present at residues 417–422 (DVDDTA). Positions 635-639 (DDYFD) match the DDXXD motif motif.

This sequence belongs to the terpene synthase family. Requires Mg(2+) as cofactor.

The protein localises to the plastid. Its subcellular location is the chloroplast. It carries out the reaction (2E,6E,10E)-geranylgeranyl diphosphate = ent-copalyl diphosphate. The catalysed reaction is ent-copalyl diphosphate = ent-kaur-16-ene + diphosphate. The enzyme catalyses ent-copalyl diphosphate = ent-beyerene + diphosphate. It catalyses the reaction ent-copalyl diphosphate = ent-sandaracopimara-8(14),15-diene + diphosphate. It carries out the reaction ent-copalyl diphosphate = ent-isokaurene + diphosphate. The catalysed reaction is ent-copalyl diphosphate + H2O = 16alpha-hydroxy-ent-kaurene + diphosphate. The protein operates within secondary metabolite biosynthesis; terpenoid biosynthesis. In terms of biological role, bifunctional copalyl diphosphate/kaurene synthase involved in the biosynthesis of labdane-related diterpenoids (LRDs) natural products such as ent-beyerene, an antimicrobial compound. Supports the conversion of geranylgeranyl diphosphate (GGPP) to ent-copalyl diphosphate (ent-CDP). Also catalyzes the subsequent cyclization of ent-CDP into many diterpenes, including ent-kaur-16-ene as the major product, and ent-beyerene, ent-sandaracopimaradiene, ent-kaur-15-ene (ent-isokaurene) and 16-hydroxy-ent-kaurene (ent-16-alpha-hydroxy-kaurene) as minor products. The sequence is that of Ent-kaurene synthase CPS/KS, chloroplastic from Physcomitrium patens (Spreading-leaved earth moss).